Reading from the N-terminus, the 612-residue chain is UvrABC system protein C (612 aa).

Positions 20–98 (THSGVYRMLD…IKQHRPKYNI (79 aa)) constitute a GIY-YIG domain. Residues 208-243 (STVLEEISAKMYQASEDMEYEKAQVYRDQLVVLRKL) enclose the UVR domain.

This sequence belongs to the UvrC family. Interacts with UvrB in an incision complex.

It localises to the cytoplasm. Functionally, the UvrABC repair system catalyzes the recognition and processing of DNA lesions. UvrC both incises the 5' and 3' sides of the lesion. The N-terminal half is responsible for the 3' incision and the C-terminal half is responsible for the 5' incision. The polypeptide is UvrABC system protein C (Francisella tularensis subsp. novicida (strain U112)).